The primary structure comprises 55 residues: UPF0391 membrane protein Tbd_2772 (55 aa).

The next 2 helical transmembrane spans lie at 1-21 (MFGWAITFLVIAIAAGIFGFA) and 28-48 (AWIAKVLFVVGLAAVLIMLVM).

The protein belongs to the UPF0391 family.

It is found in the cell membrane. In Thiobacillus denitrificans (strain ATCC 25259 / T1), this protein is UPF0391 membrane protein Tbd_2772.